Reading from the N-terminus, the 262-residue chain is MLTYPAIDPVAVSFGPLKVHWYGLMYVIGIAATWILARRRVQRSANPLFTPAQVEDLVFYAAIGVVVGGRLGYALFYNFSGFLHDPAMLFRIWEGGMAFHGGLIGVLIAMYAYGRSQGIRFFDVADFLAPYVPIGLLAGRIGNFINGELWGKPSDLPWAMIFPHAGDVPRHPSQLYEAFLEGLVLLIILQWFSRRSPPRMAVSGLFLLGYGVFRFAVEFVRLPDVQLGYLAFGWLTMGQILCLPMILFGIVLLAAAYARRSA.

Transmembrane regions (helical) follow at residues 17–37, 57–77, and 92–112; these read LKVH…WILA, LVFY…ALFY, and IWEG…AMYA. Arginine 140 is a binding site for a 1,2-diacyl-sn-glycero-3-phospho-(1'-sn-glycerol). The next 2 membrane-spanning stretches (helical) occupy residues 200 to 220 and 234 to 254; these read MAVS…VEFV and WLTM…VLLA.

Belongs to the Lgt family.

It localises to the cell inner membrane. The catalysed reaction is L-cysteinyl-[prolipoprotein] + a 1,2-diacyl-sn-glycero-3-phospho-(1'-sn-glycerol) = an S-1,2-diacyl-sn-glyceryl-L-cysteinyl-[prolipoprotein] + sn-glycerol 1-phosphate + H(+). It functions in the pathway protein modification; lipoprotein biosynthesis (diacylglyceryl transfer). In terms of biological role, catalyzes the transfer of the diacylglyceryl group from phosphatidylglycerol to the sulfhydryl group of the N-terminal cysteine of a prolipoprotein, the first step in the formation of mature lipoproteins. This is Phosphatidylglycerol--prolipoprotein diacylglyceryl transferase from Methylococcus capsulatus (strain ATCC 33009 / NCIMB 11132 / Bath).